The chain runs to 435 residues: Putative acid phosphatase F26C11.1 (435 aa).

Histidine 38 acts as the Nucleophile in catalysis. Catalysis depends on aspartate 317, which acts as the Proton donor. Residues cysteine 382 and cysteine 388 are joined by a disulfide bond.

Belongs to the histidine acid phosphatase family.

It carries out the reaction a phosphate monoester + H2O = an alcohol + phosphate. The chain is Putative acid phosphatase F26C11.1 from Caenorhabditis elegans.